The sequence spans 137 residues: Protein LTO1 homolog (137 aa).

Alanine 2 is modified (N-acetylalanine). Position 4 is a phosphoserine (serine 4). Residues glycine 22–glycine 58 form a deca-GX3 motif; required for interaction with YAE1 and the CIA complex region.

Belongs to the LTO1 family. As to quaternary structure, forms a complex with YAE1. Interacts with PYCR1 and PYCR2. Widely expressed. Highly expressed in placenta, kidney and skeletal muscle.

Its subcellular location is the nucleus. The complex LTO1:YAE1 functions as a target specific adapter that probably recruits apo-ABCE1 to the cytosolic iron-sulfur protein assembly (CIA) complex machinery. May be required for biogenesis of the large ribosomal subunit and initiation of translation. May play a role in the regulation of proline metabolism and ROS production. This is Protein LTO1 homolog from Homo sapiens (Human).